The chain runs to 367 residues: Tubulin-like protein CetZ (367 aa).

Residues 11–15 (QCGNR), Ser-111, 115–117 (GTG), Glu-148, Asn-176, and Asn-194 each bind GTP.

It belongs to the CetZ family.

It localises to the cytoplasm. In terms of biological role, involved in cell shape control. The chain is Tubulin-like protein CetZ from Methanothrix thermoacetophila (strain DSM 6194 / JCM 14653 / NBRC 101360 / PT) (Methanosaeta thermophila).